The chain runs to 419 residues: UDP-N-acetylglucosamine 1-carboxyvinyltransferase (419 aa).

Residue 22–23 coordinates phosphoenolpyruvate; that stretch reads KN. R91 provides a ligand contact to UDP-N-acetyl-alpha-D-glucosamine. The active-site Proton donor is C115. At C115 the chain carries 2-(S-cysteinyl)pyruvic acid O-phosphothioketal. UDP-N-acetyl-alpha-D-glucosamine contacts are provided by residues 120–124, 160–163, D305, and I327; these read RPVDL and KVSV.

This sequence belongs to the EPSP synthase family. MurA subfamily.

The protein localises to the cytoplasm. The catalysed reaction is phosphoenolpyruvate + UDP-N-acetyl-alpha-D-glucosamine = UDP-N-acetyl-3-O-(1-carboxyvinyl)-alpha-D-glucosamine + phosphate. It functions in the pathway cell wall biogenesis; peptidoglycan biosynthesis. In terms of biological role, cell wall formation. Adds enolpyruvyl to UDP-N-acetylglucosamine. In Serratia proteamaculans (strain 568), this protein is UDP-N-acetylglucosamine 1-carboxyvinyltransferase.